Here is a 405-residue protein sequence, read N- to C-terminus: Acetylornithine/succinyldiaminopimelate aminotransferase (405 aa).

Residues 108–109 and phenylalanine 141 each bind pyridoxal 5'-phosphate; that span reads GT. Arginine 144 is a binding site for N(2)-acetyl-L-ornithine. 226–229 is a binding site for pyridoxal 5'-phosphate; that stretch reads DEVQ. N6-(pyridoxal phosphate)lysine is present on lysine 255. Residue serine 283 coordinates N(2)-acetyl-L-ornithine. A pyridoxal 5'-phosphate-binding site is contributed by threonine 284.

This sequence belongs to the class-III pyridoxal-phosphate-dependent aminotransferase family. ArgD subfamily. As to quaternary structure, homodimer. Pyridoxal 5'-phosphate is required as a cofactor.

Its subcellular location is the cytoplasm. The catalysed reaction is N(2)-acetyl-L-ornithine + 2-oxoglutarate = N-acetyl-L-glutamate 5-semialdehyde + L-glutamate. It catalyses the reaction N-succinyl-(2S,6S)-2,6-diaminopimelate + 2-oxoglutarate = (S)-2-succinylamino-6-oxoheptanedioate + L-glutamate. It participates in amino-acid biosynthesis; L-arginine biosynthesis; N(2)-acetyl-L-ornithine from L-glutamate: step 4/4. Its pathway is amino-acid biosynthesis; L-lysine biosynthesis via DAP pathway; LL-2,6-diaminopimelate from (S)-tetrahydrodipicolinate (succinylase route): step 2/3. Inhibited by gabaculine (Gcn). Functionally, involved in both the arginine and lysine biosynthetic pathways. The chain is Acetylornithine/succinyldiaminopimelate aminotransferase from Salmonella typhimurium (strain LT2 / SGSC1412 / ATCC 700720).